A 344-amino-acid polypeptide reads, in one-letter code: 2-methyl-6-phytyl-1,4-hydroquinone methyltransferase, chloroplastic (344 aa).

Residues 1–62 constitute a chloroplast transit peptide; that stretch reads MACSMLNGVD…LTTVTKCTLS (62 aa). Topologically, residues 63 to 313 are chloroplast intermembrane; that stretch reads ASERPASQPR…PVHPLVFLYR (251 aa). The interval 121-130 is SAM motif I; the sequence is VVDVGGGTGF. An SAM motif II region spans residues 166-179; the sequence is CRIIEGDAEDLPFP. An SAM motif III region spans residues 207 to 220; sequence RVLKLGGKACLIGP. Residues 314-334 form a helical membrane-spanning segment; it reads FLLGALASTYYVLVPIYMWIK. Residues 335–344 are Stromal-facing; sequence DKIFPKGMPL.

This sequence belongs to the class I-like SAM-binding methyltransferase superfamily. MPBQ/MBSQ MT family.

The protein localises to the plastid. The protein resides in the chloroplast inner membrane. It catalyses the reaction 2-methyl-6-phytyl-1,4-benzene-1,4-diol + S-adenosyl-L-methionine = 2,3-dimethyl-6-phytylbenzene-1,4-diol + S-adenosyl-L-homocysteine + H(+). The catalysed reaction is 2-methyl-6-(all-trans-nonaprenyl)benzene-1,4-diol + S-adenosyl-L-methionine = plastoquinol-9 + S-adenosyl-L-homocysteine + H(+). It carries out the reaction 6-geranylgeranyl-2-methylbenzene-1,4-diol + S-adenosyl-L-methionine = 6-geranylgeranyl-2,3-dimethylbenzene-1,4-diol + S-adenosyl-L-homocysteine + H(+). The protein operates within cofactor biosynthesis; tocopherol biosynthesis. Functionally, involved in a key methylation step in both tocopherols (vitamin E) and plastoquinone synthesis. Catalyzes the conversion of 2-methyl-6-phytyl-1,4-hydroquinone (MPBQ) to 2,3-dimethyl-6-phytyl-1,4-hydroquinone (DMPQ, a substrate for tocopherol cyclase), and 2-methyl-6-solanyl-1,4-benzoquinone (MSBQ) to plastoquinone. In Spinacia oleracea (Spinach), this protein is 2-methyl-6-phytyl-1,4-hydroquinone methyltransferase, chloroplastic.